We begin with the raw amino-acid sequence, 332 residues long: MELRTDAVLASLEMSEPVKNDEDYESLPAHASLGTHMTAGAVAGILEHTVMYPVDSVKTRMQSLQPDPKAQYRSVYGALKRIVRTEGLLRPLRGLNITVLGAGPAHALYFACYERIKRSLSDVIQNGGNSHIANGVAGSVATVLHDAVMNPAEVVKQRMQMYNSPYRSLYDCVLMVSRKEGLAAFYRSYSTQLTMNIPFQAVHFITYEFMQEHFNPHRQYRPETHIISGAAAGAVSAAVTTPLDVCKTLLNTQENVALSSAHVSGHLSGMVNALRTVYRLGGVPAFFKGIQARVIYQMPSTAIAWSVYEFFKYFLTQHESHVQEVSHKTSPT.

Solcar repeat units lie at residues 31–119 (ASLG…IKRS), 129–213 (NSHI…MQEH), and 220–314 (YRPE…FKYF). 6 helical membrane passes run 33 to 52 (LGTHMTAGAVAGILEHTVMY), 94 to 113 (GLNITVLGAGPAHALYFACY), 131 to 150 (HIANGVAGSVATVLHDAVMN), 188 to 207 (SYSTQLTMNIPFQAVHFITY), 222 to 241 (PETHIISGAAAGAVSAAVTT), and 289 to 308 (GIQARVIYQMPSTAIAWSVY).

It belongs to the mitochondrial carrier (TC 2.A.29) family. In terms of tissue distribution, highly expressed in hematopoietic organs, Expressed in the intermediate cell mass (ICM), a tissue equivalent to the mammalian extraembryonic yolk-sac blood islands. Colocalizes with gata1.

The protein localises to the mitochondrion inner membrane. It catalyses the reaction Fe(2+)(in) = Fe(2+)(out). In terms of biological role, mitochondrial iron transporter that specifically mediates iron uptake in developing erythroid cells, thereby playing an essential role in heme biosynthesis. This chain is Mitoferrin-1 (slc25a37), found in Danio rerio (Zebrafish).